The sequence spans 345 residues: D-fructose 1,6-bisphosphatase class 2/sedoheptulose 1,7-bisphosphatase (345 aa).

D33, E57, D97, and E100 together coordinate Mn(2+). Residues E100–T102, Y131, R176–R178, and D198–D200 each bind substrate. Residue E225 coordinates Mn(2+).

Belongs to the FBPase class 2 family. In terms of assembly, homotetramer. Requires Mn(2+) as cofactor.

The catalysed reaction is beta-D-fructose 1,6-bisphosphate + H2O = beta-D-fructose 6-phosphate + phosphate. The enzyme catalyses D-sedoheptulose 1,7-bisphosphate + H2O = D-sedoheptulose 7-phosphate + phosphate. The protein operates within carbohydrate biosynthesis; Calvin cycle. Inhibited by AMP and slightly innibited by hydrogen peroxyde. Its function is as follows. Catalyzes the hydrolysis of fructose 1,6-bisphosphate (Fru 1,6-P2) and sedoheptulose 1,7-bisphosphate (Sed 1,7-P2) to fructose 6-phosphate and sedoheptulose 7-phosphate, respectively. The protein is D-fructose 1,6-bisphosphatase class 2/sedoheptulose 1,7-bisphosphatase of Synechococcus elongatus (strain ATCC 33912 / PCC 7942 / FACHB-805) (Anacystis nidulans R2).